The chain runs to 515 residues: FADH(2)-dependent monooxygenase TftD (515 aa).

Position 100–104 (100–104) interacts with substrate; the sequence is RLPDA. FAD-binding positions include 151 to 153, 157 to 160, and T192; these read LNF and QTDR. 203 to 204 is a binding site for substrate; that stretch reads GC. 457 to 460 contacts FAD; it reads TMTR.

The protein belongs to the FADH(2)-utilizing monooxygenase family. As to quaternary structure, homotetramer. The chlorophenol-4-monooxygenase is composed of an oxygenase component TftD and a reductase component TftC.

It functions in the pathway xenobiotic degradation. Its function is as follows. Oxygenase component of a two-component system that degrades 2,4,5-trichlorophenol. Uses FADH(2) supplied by TftC to oxidize 2,4,5-trichlorophenol (2,4,5-TCP) to 2,5-dichloro-p-benzoquinone, which is chemically reduced to 2,5-dichloro-p-hydroquinone (2,5-DiCHQ). Then, TftD oxidizes the latter to 5-chloro-2-hydroxy-p-benzoquinone. The protein is FADH(2)-dependent monooxygenase TftD (tftD) of Burkholderia cepacia (Pseudomonas cepacia).